Consider the following 130-residue polypeptide: Small ribosomal subunit protein uS8 (130 aa).

The protein belongs to the universal ribosomal protein uS8 family. Part of the 30S ribosomal subunit. Contacts proteins S5 and S12.

Functionally, one of the primary rRNA binding proteins, it binds directly to 16S rRNA central domain where it helps coordinate assembly of the platform of the 30S subunit. The protein is Small ribosomal subunit protein uS8 of Aster yellows witches'-broom phytoplasma (strain AYWB).